The primary structure comprises 325 residues: Glutarate 2-hydroxylase (325 aa).

Fe cation contacts are provided by histidine 160, aspartate 162, and histidine 292.

Belongs to the glutarate hydroxylase family. Homotetramer. It depends on Fe(2+) as a cofactor.

The enzyme catalyses glutarate + 2-oxoglutarate + O2 = (S)-2-hydroxyglutarate + succinate + CO2. The protein operates within amino-acid degradation. In terms of biological role, acts as an alpha-ketoglutarate-dependent dioxygenase catalyzing hydroxylation of glutarate (GA) to L-2-hydroxyglutarate (L2HG). Functions in a L-lysine degradation pathway that proceeds via cadaverine, glutarate and L-2-hydroxyglutarate. The protein is Glutarate 2-hydroxylase of Escherichia coli O6:H1 (strain CFT073 / ATCC 700928 / UPEC).